The following is a 353-amino-acid chain: Carbamoyl phosphate synthase arginine-specific small chain (353 aa).

The interval 1–162 (MEGYLVLEDG…EISTFGDGNK (162 aa)) is CPSase. Residues serine 44, glycine 210, and glycine 212 each contribute to the L-glutamine site. The 187-residue stretch at 163–349 (HIALIDFGYK…LKNVIPARRE (187 aa)) folds into the Glutamine amidotransferase type-1 domain. Residue cysteine 237 is the Nucleophile of the active site. L-glutamine is bound by residues leucine 238, glutamine 241, asparagine 279, and tyrosine 282. Active-site residues include histidine 322 and glutamate 324.

The protein belongs to the CarA family. Composed of two chains; the small (or glutamine) chain promotes the hydrolysis of glutamine to ammonia, which is used by the large (or ammonia) chain to synthesize carbamoyl phosphate. Tetramer of heterodimers (alpha,beta)4.

It catalyses the reaction hydrogencarbonate + L-glutamine + 2 ATP + H2O = carbamoyl phosphate + L-glutamate + 2 ADP + phosphate + 2 H(+). The catalysed reaction is L-glutamine + H2O = L-glutamate + NH4(+). Its pathway is amino-acid biosynthesis; L-arginine biosynthesis; carbamoyl phosphate from bicarbonate: step 1/1. In terms of biological role, small subunit of the glutamine-dependent carbamoyl phosphate synthetase (CPSase). CPSase catalyzes the formation of carbamoyl phosphate from the ammonia moiety of glutamine, carbonate, and phosphate donated by ATP, constituting the first step of the biosynthetic pathway leading to arginine and/or urea. The small subunit (glutamine amidotransferase) binds and cleaves glutamine to supply the large subunit with the substrate ammonia. This is Carbamoyl phosphate synthase arginine-specific small chain from Bacillus subtilis (strain 168).